A 430-amino-acid polypeptide reads, in one-letter code: Serine--tRNA ligase (430 aa).

237–239 provides a ligand contact to L-serine; that stretch reads TAE. 268 to 270 contributes to the ATP binding site; that stretch reads RRE. Residue E291 participates in L-serine binding. 355–358 provides a ligand contact to ATP; that stretch reads EISS. An L-serine-binding site is contributed by S391.

It belongs to the class-II aminoacyl-tRNA synthetase family. Type-1 seryl-tRNA synthetase subfamily. As to quaternary structure, homodimer. The tRNA molecule binds across the dimer.

The protein localises to the cytoplasm. It carries out the reaction tRNA(Ser) + L-serine + ATP = L-seryl-tRNA(Ser) + AMP + diphosphate + H(+). The catalysed reaction is tRNA(Sec) + L-serine + ATP = L-seryl-tRNA(Sec) + AMP + diphosphate + H(+). Its pathway is aminoacyl-tRNA biosynthesis; selenocysteinyl-tRNA(Sec) biosynthesis; L-seryl-tRNA(Sec) from L-serine and tRNA(Sec): step 1/1. Functionally, catalyzes the attachment of serine to tRNA(Ser). Is also able to aminoacylate tRNA(Sec) with serine, to form the misacylated tRNA L-seryl-tRNA(Sec), which will be further converted into selenocysteinyl-tRNA(Sec). This is Serine--tRNA ligase from Magnetococcus marinus (strain ATCC BAA-1437 / JCM 17883 / MC-1).